The chain runs to 409 residues: Divalent metal cation transporter MntH (409 aa).

A run of 11 helical transmembrane segments spans residues Leu19 to Ala39, Ala46 to Val66, Trp98 to Ile118, Leu122 to Ile142, Leu155 to Ser175, Ala196 to His216, Ile241 to Phe261, Val290 to Gly310, Phe320 to Leu340, Ile348 to Leu368, and Ile388 to Leu408.

Belongs to the NRAMP family.

The protein resides in the cell inner membrane. Its function is as follows. H(+)-stimulated, divalent metal cation uptake system. This chain is Divalent metal cation transporter MntH, found in Yersinia pseudotuberculosis serotype O:1b (strain IP 31758).